The primary structure comprises 228 residues: Tungstate uptake system permease protein TupB (228 aa).

Transmembrane regions (helical) follow at residues 25–45 (IIFL…AVSI), 65–85 (VLYS…AIGL), 102–122 (AMII…TYSL), 144–164 (VIIL…VTTF), and 203–223 (MAIA…AVIY). Residues 26–222 (IFLSVFVSST…MISFAINAVI (197 aa)) enclose the ABC transmembrane type-1 domain.

This sequence belongs to the binding-protein-dependent transport system permease family. As to quaternary structure, the complex is composed of two ATP-binding proteins (TupC), two transmembrane proteins (TupB) and a solute-binding protein (TupA).

The protein localises to the cell membrane. Functionally, part of an ABC transporter complex involved in tungstate uptake. Probably responsible for the translocation of the substrate across the membrane. The polypeptide is Tungstate uptake system permease protein TupB (Peptoclostridium acidaminophilum (Eubacterium acidaminophilum)).